Here is a 669-residue protein sequence, read N- to C-terminus: Armadillo repeat-containing protein gudu (669 aa).

Residues Met-1–His-10 are compositionally biased toward polar residues. The segment at Met-1 to Arg-53 is disordered. Residues Glu-37–Glu-51 show a composition bias toward acidic residues. 10 ARM repeats span residues Gln-100 to Leu-139, Ile-141 to Lys-180, Lys-240 to Ser-279, Pro-281 to Phe-320, Gly-322 to Val-365, Asp-367 to Arg-406, Gln-408 to Glu-447, Asp-492 to Gln-531, Gly-574 to Met-613, and Pro-615 to Glu-654.

As to expression, highly expressed in testis.

In terms of biological role, important for spermatogenesis where it may have a role in sperm individualization. The sequence is that of Armadillo repeat-containing protein gudu from Drosophila melanogaster (Fruit fly).